Reading from the N-terminus, the 1043-residue chain is Ack-related non-receptor tyrosine kinase (1043 aa).

The Protein kinase domain occupies 113–379 (ITLCKELGQG…SDIVAKFPER (267 aa)). ATP-binding positions include 119–127 (LGQGEFGSV) and K146. Residue D241 is the Proton acceptor of the active site. The 66-residue stretch at 379 to 444 (RRAQSVRAVV…RPTDTVAHLG (66 aa)) folds into the SH3 domain. A disordered region spans residues 443–481 (LGSEPPCSNGTIENGFSEKEKGGKKNKKAEKESERERKK). Residues 458-481 (FSEKEKGGKKNKKAEKESERERKK) show a composition bias toward basic and acidic residues. Residues 484 to 498 (ISEPVGDVRHTCHVG) enclose the CRIB domain. Disordered stretches follow at residues 514-644 (MCPT…SAAN), 790-842 (KINE…GWSS), 859-898 (KQASVSPPPMSPTSSRLSTLDRSSISPAPPRPVTPPLSVR), and 932-993 (LIDG…RQFP). Positions 516 to 543 (PTSSSPSTSRGSQASPAPSHTSSSTTSS) are enriched in low complexity. Positions 610-624 (GNQHSVQVHDQFSSL) are enriched in polar residues. Over residues 630–644 (SLTPTAPPLTASAAN) the composition is skewed to low complexity. Residues 785–812 (EQEVRKINEKSAREHRKTEDLLREERQK) adopt a coiled-coil conformation. Positions 790–818 (KINEKSAREHRKTEDLLREERQKEQKPGE) are enriched in basic and acidic residues. The span at 825–842 (PAESLYSTRTPQQEGWSS) shows a compositional bias: polar residues. Positions 870-884 (PTSSRLSTLDRSSIS) are enriched in low complexity.

The protein belongs to the protein kinase superfamily. Tyr protein kinase family. Mg(2+) is required as a cofactor.

The enzyme catalyses L-tyrosyl-[protein] + ATP = O-phospho-L-tyrosyl-[protein] + ADP + H(+). It catalyses the reaction L-seryl-[protein] + ATP = O-phospho-L-seryl-[protein] + ADP + H(+). The catalysed reaction is L-threonyl-[protein] + ATP = O-phospho-L-threonyl-[protein] + ADP + H(+). Probable tyrosine protein kinase which plays a role in vulva development, probably by acting as a negative regulator of the let-23/EGFR and let-60/ras pathway. Involved in the negative regulation of germline development. In Caenorhabditis elegans, this protein is Ack-related non-receptor tyrosine kinase.